The following is a 435-amino-acid chain: Elongation factor 1-alpha (435 aa).

The region spanning 4–229 (KPHLNLIVIG…DQLEIPPKPV (226 aa)) is the tr-type G domain. Positions 13 to 20 (GHVDHGKS) are G1. Position 13–20 (13–20 (GHVDHGKS)) interacts with GTP. Serine 20 contacts Mg(2+). The interval 69 to 73 (GVTIN) is G2. Residues 90 to 93 (DAPG) are G3. Residues 90–94 (DAPGH) and 152–155 (NKMD) contribute to the GTP site. The tract at residues 152–155 (NKMD) is G4. Residues 193–195 (VAP) form a G5 region.

Belongs to the TRAFAC class translation factor GTPase superfamily. Classic translation factor GTPase family. EF-Tu/EF-1A subfamily.

The protein localises to the cytoplasm. The catalysed reaction is GTP + H2O = GDP + phosphate + H(+). Its function is as follows. GTP hydrolase that promotes the GTP-dependent binding of aminoacyl-tRNA to the A-site of ribosomes during protein biosynthesis. The protein is Elongation factor 1-alpha of Sulfurisphaera tokodaii (strain DSM 16993 / JCM 10545 / NBRC 100140 / 7) (Sulfolobus tokodaii).